We begin with the raw amino-acid sequence, 156 residues long: Snaclec A3 (156 aa).

Residues 1–23 form the signal peptide; sequence MGRSISVSFGLLVVFLSLSGTGA. 3 disulfide bridges follow: cysteine 27–cysteine 38, cysteine 55–cysteine 154, and cysteine 129–cysteine 146. The 122-residue stretch at 34 to 155 folds into the C-type lectin domain; it reads HEGHCYKVFN…CGQPYRFTCE (122 aa).

This sequence belongs to the snaclec family. In terms of assembly, heterodimer; disulfide-linked. As to expression, expressed by the venom gland.

Its subcellular location is the secreted. Its function is as follows. Interferes with one step of hemostasis (modulation of platelet aggregation, or coagulation cascade, for example). This Macrovipera lebetinus (Levantine viper) protein is Snaclec A3.